Reading from the N-terminus, the 343-residue chain is 4-hydroxy-2-oxovalerate aldolase (343 aa).

The 251-residue stretch at 4-254 (PRLTDTTLRD…NPGLDVFGLM (251 aa)) folds into the Pyruvate carboxyltransferase domain. 12 to 13 (RD) serves as a coordination point for substrate. Position 13 (D13) interacts with Mn(2+). The active-site Proton acceptor is H16. Substrate-binding residues include S166 and H193. 2 residues coordinate Mn(2+): H193 and H195. Substrate is bound at residue Y284.

Belongs to the 4-hydroxy-2-oxovalerate aldolase family.

It catalyses the reaction (S)-4-hydroxy-2-oxopentanoate = acetaldehyde + pyruvate. This is 4-hydroxy-2-oxovalerate aldolase from Chloroflexus aggregans (strain MD-66 / DSM 9485).